A 776-amino-acid chain; its full sequence is Venom dipeptidyl peptidase 4 (776 aa).

Residues 1-19 (MVPLRSFVLLNGLFFVLLA) form the signal peptide. N-linked (GlcNAc...) asparagine glycosylation is found at N44, N66, and N329. 2 cysteine pairs are disulfide-bonded: C449–C452 and C462–C480. N-linked (GlcNAc...) asparagine glycans are attached at residues N504 and N577. Residue S638 is the Charge relay system of the active site. A disulfide bridge connects residues C658 and C769. A glycan (N-linked (GlcNAc...) asparagine) is linked at N693. Residues D717 and H749 each act as charge relay system in the active site.

Belongs to the peptidase S9B family. DPPIV subfamily. As to expression, expressed by the venom gland.

The protein localises to the secreted. It carries out the reaction Release of an N-terminal dipeptide, Xaa-Yaa-|-Zaa-, from a polypeptide, preferentially when Yaa is Pro, provided Zaa is neither Pro nor hydroxyproline.. Venom dipeptidyl-peptidase which removes N-terminal dipeptides sequentially from polypeptides having unsubstituted N-termini provided that the penultimate residue is proline. May process venom proteins into their active forms and/or modulate the chemotactic activity of immune cells after the insect sting. The chain is Venom dipeptidyl peptidase 4 from Vespa velutina (Asian yellow-legged hornet).